Reading from the N-terminus, the 344-residue chain is Sorting nexin-16 (344 aa).

The span at 1–10 (MATPYVPVPM) shows a compositional bias: pro residues. Disordered regions lie at residues 1 to 66 (MATP…NTSS) and 81 to 107 (ASSI…EDRP). Positions 14 to 26 (NSASSFTTNRNQR) are enriched in polar residues. Positions 27 to 40 (SSSFGSVSTSSNSS) are enriched in low complexity. The segment covering 41–66 (KGQLEDSNMGNFKQTSVPDQMDNTSS) has biased composition (polar residues). The region spanning 105–218 (DRPSTPTILG…EFLCLDDPPG (114 aa)) is the PX domain. A 1,2-diacyl-sn-glycero-3-phospho-(1D-myo-inositol-3-phosphate) is bound by residues Arg144, Thr146, and Arg184. Phosphoserine is present on Ser222. Positions 223-278 (LEESRAFCETLEETNYRLQKELLEKQKEMESLKKLLSEKQLHIDTLENRIRTLSLE) form a coiled coil.

The protein belongs to the sorting nexin family. As to quaternary structure, homooligomer. Interacts with EGFR. In terms of tissue distribution, detected in placenta, lung, liver,heart and pancreas.

The protein localises to the early endosome membrane. It localises to the late endosome membrane. Its subcellular location is the cytoplasm. It is found in the lysosome. May be involved in several stages of intracellular trafficking. Plays a role in protein transport from early to late endosomes. Plays a role in protein transport to the lysosome. Promotes degradation of EGFR after EGF signaling. Plays a role in intracellular transport of vesicular stomatitis virus nucleocapsids from the endosome to the cytoplasm. This Homo sapiens (Human) protein is Sorting nexin-16 (SNX16).